A 467-amino-acid polypeptide reads, in one-letter code: Iroquois-class homeodomain protein irx-1 (467 aa).

A DNA-binding region (homeobox; TALE-type) is located at residues 126–188 (DPGRPKNATR…NARRRLKKEN (63 aa)). 3 disordered regions span residues 198-307 (EDDN…PHNK), 319-342 (SPDGALKSSPPPSQANHTSPPIQH), and 410-467 (SLSS…LPSA). Acidic residues-rich tracts occupy residues 215–225 (EDDEEIDLESI) and 233–244 (NDGEQSNEEEDE). A compositionally biased stretch (basic and acidic residues) spans 245 to 262 (KLEHLRQGEKESFKKESE). Positions 415–431 (KTPERTSPKHSDRENLP) are enriched in basic and acidic residues. A compositionally biased stretch (polar residues) spans 447–460 (RENTLSQQEGTSRI).

This sequence belongs to the TALE/IRO homeobox family. Expressed in the neural plate in overlapping patterns with other irx members, which all share an anterior border of expression. Also expressed in the mesoderm, placodes and notochord. Broadly expressed in the tailbud rhombencephalon (hindbrain). Outside the nervous system and at tailbud stages, expressed in the developing otic vesicle, branchial arches, prospective heart region and pronephros.

It is found in the nucleus. Functionally, acts partially redundantly with other irx members in neural patterning. Required for formation of the posterior forebrain, midbrain, hindbrain, and to a lesser extent, spinal cord. Acts early in neural plate development to induce expression of some but not all proneural genes, and specify a neural precursor state. Also up-regulates repressors that prevent neuronal differentiation. Patterns the neuroectoderm in both the anterior/posterior and dorsal/ventral axes. Acts primarily as a transcriptional repressor during neural development, and binds to the bmp4 promoter to repress gene expression and thus mediate down-regulation of bmp4 by wnt signaling. Controls multiple processes through bmp4-repression including neural plate development, neural crest specification and Spemann organizer development. Involved in the specification of the preplacodal field at the anterior border of the neural plate. Regulates the genetic cascade of interactions that are necessary for positioning the isthmus organizer and the formation of the midbrain-hindbrain boundary. Required during at least two stages of pronephros kidney development; during neurula stages, maintains transcription of key renal genes to define the size and identity of the pronephric anlage, probably in part through regulation of bmp-signaling. Subsequently required for proper formation of the intermediate tubule segment of the pronephros. Acts principally as a transcriptional activator during pronephros development. The chain is Iroquois-class homeodomain protein irx-1 from Xenopus tropicalis (Western clawed frog).